Here is a 468-residue protein sequence, read N- to C-terminus: 6-phosphogluconate dehydrogenase, decarboxylating (468 aa).

NADP(+) contacts are provided by residues 10–15 (GMAVMG), 33–35 (NRS), 74–76 (VKA), and Asn-102. Residues Asn-102 and 128 to 130 (SGG) each bind substrate. The Proton acceptor role is filled by Lys-183. Substrate is bound at residue 186-187 (HN). Residue Glu-190 is the Proton donor of the active site. Substrate-binding residues include Tyr-191, Lys-260, Arg-287, Arg-445, and His-451.

It belongs to the 6-phosphogluconate dehydrogenase family. As to quaternary structure, homodimer.

The enzyme catalyses 6-phospho-D-gluconate + NADP(+) = D-ribulose 5-phosphate + CO2 + NADPH. It functions in the pathway carbohydrate degradation; pentose phosphate pathway; D-ribulose 5-phosphate from D-glucose 6-phosphate (oxidative stage): step 3/3. Its function is as follows. Catalyzes the oxidative decarboxylation of 6-phosphogluconate to ribulose 5-phosphate and CO(2), with concomitant reduction of NADP to NADPH. The polypeptide is 6-phosphogluconate dehydrogenase, decarboxylating (gnd) (Escherichia coli (strain K12)).